The sequence spans 143 residues: SsrA-binding protein (143 aa).

Belongs to the SmpB family.

It localises to the cytoplasm. In terms of biological role, required for rescue of stalled ribosomes mediated by trans-translation. Binds to transfer-messenger RNA (tmRNA), required for stable association of tmRNA with ribosomes. tmRNA and SmpB together mimic tRNA shape, replacing the anticodon stem-loop with SmpB. tmRNA is encoded by the ssrA gene; the 2 termini fold to resemble tRNA(Ala) and it encodes a 'tag peptide', a short internal open reading frame. During trans-translation Ala-aminoacylated tmRNA acts like a tRNA, entering the A-site of stalled ribosomes, displacing the stalled mRNA. The ribosome then switches to translate the ORF on the tmRNA; the nascent peptide is terminated with the 'tag peptide' encoded by the tmRNA and targeted for degradation. The ribosome is freed to recommence translation, which seems to be the essential function of trans-translation. The polypeptide is SsrA-binding protein (Mycoplasmoides gallisepticum (strain R(low / passage 15 / clone 2)) (Mycoplasma gallisepticum)).